The sequence spans 366 residues: MKFCAIFVLFIVLAINGYDCKIVQFIFGDSLSDVGNNKNLPRSLATANLPFYGIDFGNGLPNGRFTNGRTVSDIIGDKIGLPRPVAFLDPSMNEDVILENGVNYASGGGGILNETGGYFIQRFSLWKQIELFQGTQDVVVAKIGKKEADKFFQDARYVVALGSNDFINNYLMPVYSDSWKYNDQTFVDYLMETLESQLKVLHSLGARKLMVFGLGPMGCIPLQRALSLDGNCQNKASNLAKRFNKAATTMLLDLETKLPNASYRFGEAYDLVNDVITNPKKYGFDNSDSPCCSFYRIRPALTCIPASTLCKDRSKYVFWDEYHPTDKANELVANILIKRFDFMRADDGISHAPSPAPDISPSSDNN.

Positions 1-20 (MKFCAIFVLFIVLAINGYDC) are cleaved as a signal peptide. Catalysis depends on serine 30, which acts as the Nucleophile. Asparagine 113 and asparagine 260 each carry an N-linked (GlcNAc...) asparagine glycan. Residues aspartate 320 and histidine 323 contribute to the active site.

This sequence belongs to the 'GDSL' lipolytic enzyme family.

Its subcellular location is the secreted. In Arabidopsis thaliana (Mouse-ear cress), this protein is GDSL esterase/lipase At1g74460.